The sequence spans 236 residues: Class B acid phosphatase (236 aa).

The signal sequence occupies residues 1 to 22 (MNHTLRSITLVLACVASLSANA). Asp70 serves as the catalytic Nucleophile. Mg(2+)-binding residues include Asp70 and Asp72. Asp72 acts as the Proton donor in catalysis. Residues 138-139 (TG) and Lys176 each bind substrate. Asp191 is a Mg(2+) binding site.

This sequence belongs to the class B bacterial acid phosphatase family. Homotetramer. The cofactor is Mg(2+).

The protein localises to the periplasm. The catalysed reaction is a phosphate monoester + H2O = an alcohol + phosphate. Its function is as follows. Dephosphorylates several organic phosphate monoesters. Also has a phosphotransferase activity catalyzing the transfer of low-energy phosphate groups from organic phosphate monoesters to free hydroxyl groups of various organic compounds. The protein is Class B acid phosphatase of Marinomonas sp. (strain MWYL1).